A 273-amino-acid polypeptide reads, in one-letter code: 2,3,4,5-tetrahydropyridine-2,6-dicarboxylate N-succinyltransferase (273 aa).

The substrate site is built by R106 and D143.

This sequence belongs to the transferase hexapeptide repeat family. As to quaternary structure, homotrimer.

It is found in the cytoplasm. It carries out the reaction (S)-2,3,4,5-tetrahydrodipicolinate + succinyl-CoA + H2O = (S)-2-succinylamino-6-oxoheptanedioate + CoA. It participates in amino-acid biosynthesis; L-lysine biosynthesis via DAP pathway; LL-2,6-diaminopimelate from (S)-tetrahydrodipicolinate (succinylase route): step 1/3. The polypeptide is 2,3,4,5-tetrahydropyridine-2,6-dicarboxylate N-succinyltransferase (Wolbachia sp. subsp. Brugia malayi (strain TRS)).